The sequence spans 241 residues: Homeobox protein TGIF2LX (241 aa).

Disordered stretches follow at residues 1 to 58 (MEAA…GNLP) and 126 to 210 (TGKD…SPEE). Residues 21–39 (AKTQSPAQDTSIMSRNNAD) are compositionally biased toward polar residues. Positions 48–111 (EHKKKRKGNL…INARRRILPD (64 aa)) form a DNA-binding region, homeobox; TALE-type. The segment covering 195–206 (VSVTSPSSPELV) has biased composition (low complexity).

It belongs to the TALE/TGIF homeobox family. Specifically expressed in adult testis.

It is found in the nucleus. May have a transcription role in testis. This is Homeobox protein TGIF2LX (TGIF2LX) from Homo sapiens (Human).